We begin with the raw amino-acid sequence, 512 residues long: Chlorogenic acid esterase (512 aa).

Residues 1–18 (MLLRLCIIATLLVSHCVA) form the signal peptide. N-linked (GlcNAc...) asparagine glycans are attached at residues asparagine 47, asparagine 80, and asparagine 98. Cysteine 92 and cysteine 120 are oxidised to a cystine. Serine 230 functions as the Acyl-ester intermediate in the catalytic mechanism. Residue asparagine 271 is glycosylated (N-linked (GlcNAc...) asparagine). Residues cysteine 281 and cysteine 292 are joined by a disulfide bond. 3 N-linked (GlcNAc...) asparagine glycosylation sites follow: asparagine 295, asparagine 322, and asparagine 328. Catalysis depends on glutamate 351, which acts as the Charge relay system. Residues asparagine 391 and asparagine 402 are each glycosylated (N-linked (GlcNAc...) asparagine). Residue histidine 416 is the Charge relay system of the active site. An N-linked (GlcNAc...) asparagine glycan is attached at asparagine 474.

This sequence belongs to the type-B carboxylesterase/lipase family.

It is found in the secreted. The catalysed reaction is chlorogenate + H2O = L-quinate + (E)-caffeate + H(+). Extracellular chlorogenic acid esterase that releases caffeic acid from chlorogenic acid (CGA) contained in natural substrates such as apple marc and coffee pulp. Shows no activity towards 5-O-p-coumaroyl quinic acid, another quinic ester derivative, and rosmarinic acid, another caffeic ester derivative. This is Chlorogenic acid esterase from Aspergillus niger.